Consider the following 138-residue polypeptide: UPF0201 protein PYRAB09730 (138 aa).

This sequence belongs to the UPF0201 family.

This chain is UPF0201 protein PYRAB09730, found in Pyrococcus abyssi (strain GE5 / Orsay).